The chain runs to 166 residues: MTWTTPDLCDRYPDAMIAEPLFRHFGGRTAFAGPLATVRCFEDNSRVRELAATPGDGRVLVVDGQGSLKHALLGDQIAANAVANGWAGVLIHGCVRDVEILATLPLGVLALAACPRRTERRDLGDVDVPVNFAGVPFVPGHWLYADANGVLVAPQPLALDGAGGSI.

Substrate contacts are provided by residues 74–77 (GDQI) and Arg-96. Asp-97 is an a divalent metal cation binding site.

This sequence belongs to the class II aldolase/RraA-like family. As to quaternary structure, homotrimer. The cofactor is a divalent metal cation.

It carries out the reaction 4-hydroxy-4-methyl-2-oxoglutarate = 2 pyruvate. The enzyme catalyses oxaloacetate + H(+) = pyruvate + CO2. Catalyzes the aldol cleavage of 4-hydroxy-4-methyl-2-oxoglutarate (HMG) into 2 molecules of pyruvate. Also contains a secondary oxaloacetate (OAA) decarboxylase activity due to the common pyruvate enolate transition state formed following C-C bond cleavage in the retro-aldol and decarboxylation reactions. The chain is Putative 4-hydroxy-4-methyl-2-oxoglutarate aldolase from Xanthomonas axonopodis pv. citri (strain 306).